A 143-amino-acid polypeptide reads, in one-letter code: MLSVDPEKKRAKANAVDIYVGRRIRQRRRWQNMSQAALGEAIGVTFQQVQKYEKGSNRVGAGRLQQISDALEVHPSYFFEDMPDDTQSIGQGAPNQAYIPPEVIEFAASDEGVELIRAFSRVGNLNVRCRIVKLLKSLGEHDW.

One can recognise an HTH cro/C1-type domain in the interval 24-78; it reads IRQRRRWQNMSQAALGEAIGVTFQQVQKYEKGSNRVGAGRLQQISDALEVHPSYF. Positions 35–54 form a DNA-binding region, H-T-H motif; that stretch reads QAALGEAIGVTFQQVQKYEK.

This is an uncharacterized protein from Sinorhizobium fredii (strain NBRC 101917 / NGR234).